The following is a 281-amino-acid chain: MSATGGAKSFTPPDIAKAKGKAPIVCLTAYTTPIARLLDPHCDVVLVGDSVGMVMHGLPSTLGVTLDMMIMHGKAVRRGLERALMVVDMPFGSYEEGPEQAFRNAARVMAETGCAAVKLEGGESMAETIRFLTGRGIPVMAHVGLTPQAVNAFGGYQVQGRGEDGDRVMRDAQAVAKAGAFSVVLEKVPEPLARRITKEIPIPTIGIGASPACDGQVLVVDDMLGMFTDFRPKFVKRYAELAEAAEAGIAAYAKDVRQRRFPAPEHVFSDMPKPVKGGEAA.

Positions 49 and 88 each coordinate Mg(2+). Residues 49–50, aspartate 88, and lysine 118 contribute to the 3-methyl-2-oxobutanoate site; that span reads DS. Glutamate 120 is a Mg(2+) binding site. The Proton acceptor role is filled by glutamate 186.

The protein belongs to the PanB family. Homodecamer; pentamer of dimers. Mg(2+) serves as cofactor.

It is found in the cytoplasm. The catalysed reaction is 3-methyl-2-oxobutanoate + (6R)-5,10-methylene-5,6,7,8-tetrahydrofolate + H2O = 2-dehydropantoate + (6S)-5,6,7,8-tetrahydrofolate. The protein operates within cofactor biosynthesis; (R)-pantothenate biosynthesis; (R)-pantoate from 3-methyl-2-oxobutanoate: step 1/2. In terms of biological role, catalyzes the reversible reaction in which hydroxymethyl group from 5,10-methylenetetrahydrofolate is transferred onto alpha-ketoisovalerate to form ketopantoate. This Chelativorans sp. (strain BNC1) protein is 3-methyl-2-oxobutanoate hydroxymethyltransferase.